Consider the following 113-residue polypeptide: Beta-defensin 112 (113 aa).

Intrachain disulfides connect Cys-54/Cys-82, Cys-61/Cys-75, and Cys-65/Cys-83.

This sequence belongs to the beta-defensin family.

It is found in the secreted. Functionally, has antibacterial activity. The polypeptide is Beta-defensin 112 (DEFB112) (Homo sapiens (Human)).